The following is a 429-amino-acid chain: Glutamyl-tRNA reductase (429 aa).

Residues 56–59 (TCNR), S119, 124–126 (EPQ), and Q130 each bind substrate. The active-site Nucleophile is the C57. NADP(+) is bound at residue 199–204 (GAGEMI).

The protein belongs to the glutamyl-tRNA reductase family. In terms of assembly, homodimer.

The catalysed reaction is (S)-4-amino-5-oxopentanoate + tRNA(Glu) + NADP(+) = L-glutamyl-tRNA(Glu) + NADPH + H(+). The protein operates within porphyrin-containing compound metabolism; protoporphyrin-IX biosynthesis; 5-aminolevulinate from L-glutamyl-tRNA(Glu): step 1/2. Functionally, catalyzes the NADPH-dependent reduction of glutamyl-tRNA(Glu) to glutamate 1-semialdehyde (GSA). In Herminiimonas arsenicoxydans, this protein is Glutamyl-tRNA reductase.